The primary structure comprises 166 residues: Ubiquitin-fold modifier-conjugating enzyme 1 (166 aa).

Catalysis depends on Cys116, which acts as the Glycyl thioester intermediate.

It belongs to the ubiquitin-conjugating enzyme family. UFC1 subfamily. As to quaternary structure, interacts with UBA5 (via C-terminus). Interacts with UFL1. Interacts with UFM1.

Its function is as follows. E2-like enzyme which specifically catalyzes the second step in ufmylation. Accepts the ubiquitin-like modifier UFM1 from the E1 enzyme UBA5 and forms an intermediate with UFM1 via a thioester linkage. Ufmylation is involved in various processes, such as ribosome recycling, response to DNA damage, interferon response or reticulophagy (also called ER-phagy). This Danio rerio (Zebrafish) protein is Ubiquitin-fold modifier-conjugating enzyme 1 (ufc1).